A 228-amino-acid chain; its full sequence is Transcription factor zip-11 (228 aa).

The basic motif stretch occupies residues R166–R202. The region spanning R166–K224 is the bZIP domain. The tract at residues L203–L210 is leucine-zipper.

This sequence belongs to the bZIP family. In terms of assembly, interacts with CCAAT/enhancer-binding protein cebp-2.

Its subcellular location is the nucleus. Its function is as follows. Transcription factor. Involved in modulating innate immune response pathways, acting to promote resistance against infection by Gram-negative bacterium P.aeruginosa strain PA14. May act as part of a feedback regulatory loop with the pmk-1/p38 MAPK pathway. May also function in concert with CCAAT/enhancer-binding protein cebp-2 to mediate immune responses, independently of the pmk-1/p38 MAPK pathway. The sequence is that of Transcription factor zip-11 from Caenorhabditis elegans.